The chain runs to 387 residues: Succinyl-diaminopimelate desuccinylase (387 aa).

Histidine 74 provides a ligand contact to Zn(2+). Residue aspartate 76 is part of the active site. Zn(2+) is bound at residue aspartate 107. The active-site Proton acceptor is glutamate 142. Zn(2+)-binding residues include glutamate 143, glutamate 171, and histidine 360.

It belongs to the peptidase M20A family. DapE subfamily. As to quaternary structure, homodimer. It depends on Zn(2+) as a cofactor. Requires Co(2+) as cofactor.

The catalysed reaction is N-succinyl-(2S,6S)-2,6-diaminopimelate + H2O = (2S,6S)-2,6-diaminopimelate + succinate. It participates in amino-acid biosynthesis; L-lysine biosynthesis via DAP pathway; LL-2,6-diaminopimelate from (S)-tetrahydrodipicolinate (succinylase route): step 3/3. Catalyzes the hydrolysis of N-succinyl-L,L-diaminopimelic acid (SDAP), forming succinate and LL-2,6-diaminopimelate (DAP), an intermediate involved in the bacterial biosynthesis of lysine and meso-diaminopimelic acid, an essential component of bacterial cell walls. The sequence is that of Succinyl-diaminopimelate desuccinylase from Rhodopseudomonas palustris (strain ATCC BAA-98 / CGA009).